A 533-amino-acid polypeptide reads, in one-letter code: Beta-glucosidase 10 (533 aa).

The signal sequence occupies residues 1–23 (MAVAGAMVMSGGVLLLLLAFTCA). Gln-53 provides a ligand contact to a beta-D-glucoside. Asn-122 carries an N-linked (GlcNAc...) asparagine glycan. A beta-D-glucoside is bound by residues His-157 and 202–203 (NE). Glu-203 functions as the Proton donor in the catalytic mechanism. Cys-222 and Cys-230 are oxidised to a cystine. A beta-D-glucoside is bound at residue Tyr-369. An N-linked (GlcNAc...) asparagine glycan is attached at Asn-384. Glu-440 lines the a beta-D-glucoside pocket. Glu-440 acts as the Nucleophile in catalysis. An N-linked (GlcNAc...) asparagine glycan is attached at Asn-448. Residues Trp-489, 496–497 (EW), and Phe-505 contribute to the a beta-D-glucoside site.

It belongs to the glycosyl hydrolase 1 family.

The catalysed reaction is Hydrolysis of terminal, non-reducing beta-D-glucosyl residues with release of beta-D-glucose.. This is Beta-glucosidase 10 (BGLU10) from Oryza sativa subsp. japonica (Rice).